The primary structure comprises 343 residues: L-threonine 3-dehydrogenase (343 aa).

Cysteine 39 is a binding site for Zn(2+). Residues threonine 41 and histidine 44 each act as charge relay system in the active site. Zn(2+) contacts are provided by histidine 64, glutamate 65, cysteine 94, cysteine 97, cysteine 100, and cysteine 108. NAD(+) contacts are provided by residues isoleucine 176, aspartate 196, arginine 201, leucine 263 to isoleucine 265, and isoleucine 287 to tyrosine 288.

Belongs to the zinc-containing alcohol dehydrogenase family. As to quaternary structure, homotetramer. It depends on Zn(2+) as a cofactor.

The protein resides in the cytoplasm. The catalysed reaction is L-threonine + NAD(+) = (2S)-2-amino-3-oxobutanoate + NADH + H(+). The protein operates within amino-acid degradation; L-threonine degradation via oxydo-reductase pathway; glycine from L-threonine: step 1/2. In terms of biological role, catalyzes the NAD(+)-dependent oxidation of L-threonine to 2-amino-3-ketobutyrate. The chain is L-threonine 3-dehydrogenase from Anaeromyxobacter sp. (strain Fw109-5).